Reading from the N-terminus, the 616-residue chain is Bifunctional 2-aminoethylphosphonate cytidylyltransferase/aminotransferase (616 aa).

The 2-aminoethylphosphonate cytidylyltransferase stretch occupies residues methionine 1–glutamate 240. 8 residues coordinate CMP-(2-aminoethyl)phosphonate: leucine 8, glycine 10, glycine 11, lysine 25, threonine 83, threonine 88, glutamate 104, and serine 105. Residues aspartate 106 and aspartate 136 each coordinate Mg(2+). CMP-(2-aminoethyl)phosphonate is bound by residues aspartate 136, lysine 153, and glutamate 196. Mg(2+) contacts are provided by glutamate 220 and aspartate 222. The segment at glutamate 250–valine 616 is 2-aminoethylphosphonate aminotransferase. Positions 313, 314, 315, 390, 441, and 490 each coordinate pyridoxal 5'-phosphate.

In the N-terminal section; belongs to the LicC/PntC cytidylyltransferase family. This sequence in the C-terminal section; belongs to the class-V pyridoxal-phosphate-dependent aminotransferase family. PhnW subfamily. Homodimer. Requires Mg(2+) as cofactor. Zn(2+) is required as a cofactor. It depends on pyridoxal 5'-phosphate as a cofactor.

The enzyme catalyses (2-aminoethyl)phosphonate + CTP = CMP-(2-aminoethyl)phosphonate + diphosphate. It catalyses the reaction (2-aminoethyl)phosphonate + pyruvate = phosphonoacetaldehyde + L-alanine. The protein operates within phosphorus metabolism; phosphonate biosynthesis. Its activity is regulated as follows. Cytidylyltransferase activity is inhibited in the presence of EDTA and is restored by the addition of Mg(2+) or Zn(2+). In terms of biological role, bifunctional transferase involved in the biosynthesis of cell-surface phosphonates. The aminotransferase region catalyzes the transformation of phosphonoacetaldehyde (PnAA) to 2-aminoethylphosphonate (AEP). The cytidylyltransferase region catalyzes the activation of 2-aminoethylphosphonate (AEP) to CMP-2-aminoethylphosphonate (CMP-AEP). Cannot use phosphocholine. Exhibits strong activity towards CTP, limited activity towards ATP and no activity with GTP. In Treponema denticola (strain ATCC 35405 / DSM 14222 / CIP 103919 / JCM 8153 / KCTC 15104), this protein is Bifunctional 2-aminoethylphosphonate cytidylyltransferase/aminotransferase.